The chain runs to 262 residues: Elongator complex protein 5 (262 aa).

Disordered stretches follow at residues 181–214 (TPLD…FKIE) and 229–262 (PYER…DLCI). Positions 200-211 (AEQTTEPASSTF) are enriched in polar residues. The segment covering 246 to 262 (DADDDFDEEDPDEDLCI) has biased composition (acidic residues).

This sequence belongs to the ELP5 family. In terms of assembly, component of the elongator complex composed of Elp1, Elp2, Elp3, Elp4, Elp5 and Elp6. The elongator complex associates with and stabilizes microtubules; efficient interaction requires the full complex.

Its subcellular location is the cytoplasm. The protein localises to the nucleus. The protein resides in the cytoskeleton. It localises to the spindle. The protein operates within tRNA modification; 5-methoxycarbonylmethyl-2-thiouridine-tRNA biosynthesis. Component of the elongator complex, which is required for multiple tRNA modifications, including mcm5U (5-methoxycarbonylmethyl uridine), mcm5s2U (5-methoxycarbonylmethyl-2-thiouridine), and ncm5U (5-carbamoylmethyl uridine). The elongator complex catalyzes the formation of carboxymethyluridine in the wobble base at position 34 in tRNAs. Binding by the elongator complex stabilizes microtubules and promotes their growth. This induces central spindle asymmetry, promoting polarized signaling endosome trafficking during asymmetric cell division and cell fate assignation of sensory organ precursor cells. This chain is Elongator complex protein 5, found in Drosophila melanogaster (Fruit fly).